A 184-amino-acid chain; its full sequence is Holliday junction branch migration complex subunit RuvA (184 aa).

A domain I region spans residues 1 to 64; it reads MIKAIEGIIT…EDANLLYGFI (64 aa). The tract at residues 65–137 is domain II; that stretch reads KESEQRIFEM…LSDAKFGEIN (73 aa). A region of interest (flexible linker) is located at residue asparagine 137. Positions 138–184 are domain III; it reads SMPSYQNEAFMALESLGFKRDRISKVLNECSSNDTASLIKEALKKLA.

The protein belongs to the RuvA family. Homotetramer. Forms an RuvA(8)-RuvB(12)-Holliday junction (HJ) complex. HJ DNA is sandwiched between 2 RuvA tetramers; dsDNA enters through RuvA and exits via RuvB. An RuvB hexamer assembles on each DNA strand where it exits the tetramer. Each RuvB hexamer is contacted by two RuvA subunits (via domain III) on 2 adjacent RuvB subunits; this complex drives branch migration. In the full resolvosome a probable DNA-RuvA(4)-RuvB(12)-RuvC(2) complex forms which resolves the HJ.

The protein localises to the cytoplasm. Functionally, the RuvA-RuvB-RuvC complex processes Holliday junction (HJ) DNA during genetic recombination and DNA repair, while the RuvA-RuvB complex plays an important role in the rescue of blocked DNA replication forks via replication fork reversal (RFR). RuvA specifically binds to HJ cruciform DNA, conferring on it an open structure. The RuvB hexamer acts as an ATP-dependent pump, pulling dsDNA into and through the RuvAB complex. HJ branch migration allows RuvC to scan DNA until it finds its consensus sequence, where it cleaves and resolves the cruciform DNA. This Campylobacter fetus subsp. fetus (strain 82-40) protein is Holliday junction branch migration complex subunit RuvA.